A 192-amino-acid chain; its full sequence is Putative BTB/POZ domain-containing protein At4g04090 (192 aa).

Positions 23–96 constitute a BTB domain; it reads VDVRLMARDS…TYSDGSMLSE (74 aa).

It functions in the pathway protein modification; protein ubiquitination. Functionally, may act as a substrate-specific adapter of an E3 ubiquitin-protein ligase complex (CUL3-RBX1-BTB) which mediates the ubiquitination and subsequent proteasomal degradation of target proteins. In Arabidopsis thaliana (Mouse-ear cress), this protein is Putative BTB/POZ domain-containing protein At4g04090.